Reading from the N-terminus, the 363-residue chain is 1-aminocyclopropane-1-carboxylate oxidase homolog (363 aa).

Residues 212–312 (FHLFCSCNYY…MSITCFFGES (101 aa)) form the Fe2OG dioxygenase domain. Fe cation is bound by residues histidine 236, aspartate 238, and histidine 292.

Belongs to the iron/ascorbate-dependent oxidoreductase family.

The chain is 1-aminocyclopropane-1-carboxylate oxidase homolog (ACO3) from Solanum lycopersicum (Tomato).